Reading from the N-terminus, the 328-residue chain is Malate dehydrogenase (328 aa).

12 to 18 (GAAGQIG) lines the NAD(+) pocket. Positions 95 and 101 each coordinate substrate. NAD(+)-binding positions include Asn-108, Gln-115, and 132 to 134 (VGN). 2 residues coordinate substrate: Asn-134 and Arg-165. His-190 acts as the Proton acceptor in catalysis.

The protein belongs to the LDH/MDH superfamily. MDH type 2 family.

The catalysed reaction is (S)-malate + NAD(+) = oxaloacetate + NADH + H(+). Functionally, catalyzes the reversible oxidation of malate to oxaloacetate. This is Malate dehydrogenase from Methylibium petroleiphilum (strain ATCC BAA-1232 / LMG 22953 / PM1).